Reading from the N-terminus, the 258-residue chain is 5-oxoprolinase subunit A 2 (258 aa).

This sequence belongs to the LamB/PxpA family. Forms a complex composed of PxpA, PxpB and PxpC.

The catalysed reaction is 5-oxo-L-proline + ATP + 2 H2O = L-glutamate + ADP + phosphate + H(+). Functionally, catalyzes the cleavage of 5-oxoproline to form L-glutamate coupled to the hydrolysis of ATP to ADP and inorganic phosphate. The chain is 5-oxoprolinase subunit A 2 from Pseudomonas putida (strain ATCC 47054 / DSM 6125 / CFBP 8728 / NCIMB 11950 / KT2440).